Here is a 710-residue protein sequence, read N- to C-terminus: uncharacterized protein (710 aa).

Coiled coils occupy residues 273-298 and 477-528; these read LYRQ…MEEG and RYEK…VADT.

This is an uncharacterized protein from Coxiella burnetii (strain RSA 493 / Nine Mile phase I).